We begin with the raw amino-acid sequence, 88 residues long: Antitoxin VapB21 (88 aa).

Antitoxin component of a type II toxin-antitoxin (TA) system. This Mycobacterium tuberculosis (strain CDC 1551 / Oshkosh) protein is Antitoxin VapB21 (vapB21).